The following is a 608-amino-acid chain: Elongation factor 4 (608 aa).

The tr-type G domain maps to 11 to 193; the sequence is KKIRNFSIIA…QIVEKVPEPS (183 aa). GTP is bound by residues 23–28 and 140–143; these read DHGKST and NKID.

Belongs to the TRAFAC class translation factor GTPase superfamily. Classic translation factor GTPase family. LepA subfamily.

The protein localises to the cell membrane. The catalysed reaction is GTP + H2O = GDP + phosphate + H(+). In terms of biological role, required for accurate and efficient protein synthesis under certain stress conditions. May act as a fidelity factor of the translation reaction, by catalyzing a one-codon backward translocation of tRNAs on improperly translocated ribosomes. Back-translocation proceeds from a post-translocation (POST) complex to a pre-translocation (PRE) complex, thus giving elongation factor G a second chance to translocate the tRNAs correctly. Binds to ribosomes in a GTP-dependent manner. This is Elongation factor 4 from Listeria welshimeri serovar 6b (strain ATCC 35897 / DSM 20650 / CCUG 15529 / CIP 8149 / NCTC 11857 / SLCC 5334 / V8).